The sequence spans 287 residues: 4-hydroxybenzoate octaprenyltransferase (287 aa).

A run of 7 helical transmembrane segments spans residues 23–40, 99–119, 141–161, 163–183, 213–233, 235–255, and 266–286; these read IGSLLLLWPTLWALWLAG, LFVVLVLLAFGLVLTLNTMTI, LPQFVLGAAFGWSIPMAYAAV, ESLPATCWMMFLAYICWTVAY, LIIGLLQFSMLALLLILGTMT, LGMPYYISLLVAGGMFIYQQI, and FKAFHNNKYAGMAIFIGVLFG.

It belongs to the UbiA prenyltransferase family. It depends on Mg(2+) as a cofactor.

The protein localises to the cell inner membrane. It catalyses the reaction all-trans-octaprenyl diphosphate + 4-hydroxybenzoate = 4-hydroxy-3-(all-trans-octaprenyl)benzoate + diphosphate. It functions in the pathway cofactor biosynthesis; ubiquinone biosynthesis. Catalyzes the prenylation of para-hydroxybenzoate (PHB) with an all-trans polyprenyl group. Mediates the second step in the final reaction sequence of ubiquinone-8 (UQ-8) biosynthesis, which is the condensation of the polyisoprenoid side chain with PHB, generating the first membrane-bound Q intermediate 3-octaprenyl-4-hydroxybenzoate. The protein is 4-hydroxybenzoate octaprenyltransferase of Pectobacterium carotovorum subsp. carotovorum (strain PC1).